A 252-amino-acid chain; its full sequence is Small ribosomal subunit protein uS2 (252 aa).

Ser-2 is modified (N-acetylserine). Low complexity predominate over residues Gln-213–Ala-222. Residues Gln-213–Trp-252 form a disordered region. The segment covering Thr-223–Trp-252 has biased composition (acidic residues).

The protein belongs to the universal ribosomal protein uS2 family. As to quaternary structure, component of the small ribosomal subunit. Mature ribosomes consist of a small (40S) and a large (60S) subunit. The 40S subunit contains about 33 different proteins and 1 molecule of RNA (18S). The 60S subunit contains about 49 different proteins and 3 molecules of RNA (25S, 5.8S and 5S). Interacts with RPS21.

It is found in the cytoplasm. In terms of biological role, required for the assembly and/or stability of the 40S ribosomal subunit. Required for the processing of the 20S rRNA-precursor to mature 18S rRNA in a late step of the maturation of 40S ribosomal subunits. The polypeptide is Small ribosomal subunit protein uS2 (Zygosaccharomyces rouxii (strain ATCC 2623 / CBS 732 / NBRC 1130 / NCYC 568 / NRRL Y-229)).